The chain runs to 941 residues: Cilia- and flagella-associated protein 69 (941 aa).

Residues Met1–Ala10 show a composition bias toward low complexity. A disordered region spans residues Met1 to Ser23.

The protein resides in the cell projection. Its subcellular location is the cilium. It localises to the flagellum. Its function is as follows. Cilium- and flagellum-associated protein. In the olfactory epithelium, regulates the speed of activation and termination of the odor response and thus contributes to the robustness of olfactory transduction pathways. Required for sperm flagellum assembly and stability. The chain is Cilia- and flagella-associated protein 69 from Papio anubis (Olive baboon).